We begin with the raw amino-acid sequence, 113 residues long: N(2)-fixation sustaining protein CowN (113 aa).

It belongs to the CowN family.

Its function is as follows. Is required to sustain N(2)-dependent growth in the presence of low levels of carbon monoxide (CO). Probably acts by protecting the N(2) fixation ability of the nitrogenase complex, which is inactivated in the presence of CO. The protein is N(2)-fixation sustaining protein CowN of Wolinella succinogenes (strain ATCC 29543 / DSM 1740 / CCUG 13145 / JCM 31913 / LMG 7466 / NCTC 11488 / FDC 602W) (Vibrio succinogenes).